Here is a 293-residue protein sequence, read N- to C-terminus: 4-hydroxy-tetrahydrodipicolinate synthase (293 aa).

Position 45 (threonine 45) interacts with pyruvate. Tyrosine 133 serves as the catalytic Proton donor/acceptor. Lysine 161 serves as the catalytic Schiff-base intermediate with substrate. Isoleucine 203 provides a ligand contact to pyruvate.

This sequence belongs to the DapA family. Homotetramer; dimer of dimers.

It is found in the cytoplasm. The catalysed reaction is L-aspartate 4-semialdehyde + pyruvate = (2S,4S)-4-hydroxy-2,3,4,5-tetrahydrodipicolinate + H2O + H(+). The protein operates within amino-acid biosynthesis; L-lysine biosynthesis via DAP pathway; (S)-tetrahydrodipicolinate from L-aspartate: step 3/4. Functionally, catalyzes the condensation of (S)-aspartate-beta-semialdehyde [(S)-ASA] and pyruvate to 4-hydroxy-tetrahydrodipicolinate (HTPA). This is 4-hydroxy-tetrahydrodipicolinate synthase from Syntrophotalea carbinolica (strain DSM 2380 / NBRC 103641 / GraBd1) (Pelobacter carbinolicus).